Consider the following 169-residue polypeptide: Peptide methionine sulfoxide reductase MsrA (169 aa).

C10 is an active-site residue.

Belongs to the MsrA Met sulfoxide reductase family.

The enzyme catalyses L-methionyl-[protein] + [thioredoxin]-disulfide + H2O = L-methionyl-(S)-S-oxide-[protein] + [thioredoxin]-dithiol. It catalyses the reaction [thioredoxin]-disulfide + L-methionine + H2O = L-methionine (S)-S-oxide + [thioredoxin]-dithiol. Its function is as follows. Has an important function as a repair enzyme for proteins that have been inactivated by oxidation. Catalyzes the reversible oxidation-reduction of methionine sulfoxide in proteins to methionine. This Streptococcus equi subsp. zooepidemicus (strain H70) protein is Peptide methionine sulfoxide reductase MsrA.